The following is a 334-amino-acid chain: MIEADRLIQPQLQVQDDVVDRAMRPKLLDEYTGQDDTRAQLKVFIQAAKNRNEALDHMLIYGPPGLGKTTLAMIVANEMGVNIKSTSGPVLEKAGDLAALLTNLESGDVLFIDEIHRLSPVVEEILYPAMEDYQLDIMIGEGPAARSIKLDLPPFTLVGATTRAGALTSPLRARFGIPLRLEFYNIKDLSTIVTRSAQVMGLEIDTEGAFEIARRSRGTPRIANRLLRRVRDYAEVKHDGAITQFVADHALDLLDVDNEGFDYMDRKLMLAIIDKFMGGPVGLDNLAAAIGEERETIEDVLEPFLIQQGFIQRTPRGRIATARAYQHFQLIKPE.

The large ATPase domain (RuvB-L) stretch occupies residues 4–184 (ADRLIQPQLQ…FGIPLRLEFY (181 aa)). Residues Arg-24, Gly-65, Lys-68, Thr-69, Thr-70, 131–133 (EDY), Arg-174, Tyr-184, and Arg-221 each bind ATP. A Mg(2+)-binding site is contributed by Thr-69. The tract at residues 185–255 (NIKDLSTIVT…VADHALDLLD (71 aa)) is small ATPAse domain (RuvB-S). Residues 258–334 (NEGFDYMDRK…YQHFQLIKPE (77 aa)) form a head domain (RuvB-H) region. Arg-294, Arg-313, and Arg-318 together coordinate DNA.

It belongs to the RuvB family. Homohexamer. Forms an RuvA(8)-RuvB(12)-Holliday junction (HJ) complex. HJ DNA is sandwiched between 2 RuvA tetramers; dsDNA enters through RuvA and exits via RuvB. An RuvB hexamer assembles on each DNA strand where it exits the tetramer. Each RuvB hexamer is contacted by two RuvA subunits (via domain III) on 2 adjacent RuvB subunits; this complex drives branch migration. In the full resolvosome a probable DNA-RuvA(4)-RuvB(12)-RuvC(2) complex forms which resolves the HJ.

Its subcellular location is the cytoplasm. It carries out the reaction ATP + H2O = ADP + phosphate + H(+). In terms of biological role, the RuvA-RuvB-RuvC complex processes Holliday junction (HJ) DNA during genetic recombination and DNA repair, while the RuvA-RuvB complex plays an important role in the rescue of blocked DNA replication forks via replication fork reversal (RFR). RuvA specifically binds to HJ cruciform DNA, conferring on it an open structure. The RuvB hexamer acts as an ATP-dependent pump, pulling dsDNA into and through the RuvAB complex. RuvB forms 2 homohexamers on either side of HJ DNA bound by 1 or 2 RuvA tetramers; 4 subunits per hexamer contact DNA at a time. Coordinated motions by a converter formed by DNA-disengaged RuvB subunits stimulates ATP hydrolysis and nucleotide exchange. Immobilization of the converter enables RuvB to convert the ATP-contained energy into a lever motion, pulling 2 nucleotides of DNA out of the RuvA tetramer per ATP hydrolyzed, thus driving DNA branch migration. The RuvB motors rotate together with the DNA substrate, which together with the progressing nucleotide cycle form the mechanistic basis for DNA recombination by continuous HJ branch migration. Branch migration allows RuvC to scan DNA until it finds its consensus sequence, where it cleaves and resolves cruciform DNA. This Shewanella sp. (strain W3-18-1) protein is Holliday junction branch migration complex subunit RuvB.